The chain runs to 317 residues: Secreted mono- and diacylglycerol lipase 3 (317 aa).

Positions 1-29 are cleaved as a signal peptide; sequence MMFADDLVRMAVLRFITVALAAITNVANA. An intrachain disulfide couples Cys61 to Cys310. The N-linked (GlcNAc...) asparagine glycan is linked to Asn108. The active-site Nucleophile is Ser175. An N-linked (GlcNAc...) asparagine glycan is attached at Asn194. Asp234 is an active-site residue. N-linked (GlcNAc...) asparagine glycosylation occurs at Asn258. His294 is an active-site residue.

Belongs to the AB hydrolase superfamily. Lipase family. Class 3 subfamily.

It localises to the secreted. The catalysed reaction is a monoacylglycerol + H2O = glycerol + a fatty acid + H(+). It catalyses the reaction a diacylglycerol + H2O = a monoacylglycerol + a fatty acid + H(+). Secreted mono- and diacylglycerol lipase involved in plant virulence. Has a substrate preference for p-nitrophenyl esters with a carbon chain length of C10 (p-nitrophenyl caprate). This is Secreted mono- and diacylglycerol lipase 3 from Gibberella zeae (strain ATCC MYA-4620 / CBS 123657 / FGSC 9075 / NRRL 31084 / PH-1) (Wheat head blight fungus).